The chain runs to 417 residues: MLKKDMNIADYDPELFKAIQNETLRQEEHIELIASENYTSPRVMEAQGSQLTNKYAEGYPGKRYYGGCEYVDVVETLAIERAKELFGATYANVQPHSGSQANSAVYMALLKPGDTVLGMNLAHGGHLTHGSPVNFSGKLYNIIPYGIDESGKIDYDEMERLAVEHKPKMMIGGFSAYSGIVDWAKMREIADKIGAYLFVDMAHVAGLIAAGVYPNPVPHAHVVTSTTHKTLAGPRGGVILSAADDEDLYKKLNSAVFPGGQGGPLMHVIAGKAVAFKEALEPEFKVYQQQVVNNAKAMVEVFLERGYKIVSGGTSNHLMLVDLIGRDLTGKEADAALGSANITVNKNSVPNDPRSPFVTSGVRIGTPAITRRGFKEVESKELTGWICDILDDASNPAVIERVKGQVLALCARFPVYG.

(6S)-5,6,7,8-tetrahydrofolate contacts are provided by residues leucine 121 and 125-127 (GHL). Residue lysine 229 is modified to N6-(pyridoxal phosphate)lysine. 355–357 (SPF) serves as a coordination point for (6S)-5,6,7,8-tetrahydrofolate.

The protein belongs to the SHMT family. In terms of assembly, homodimer. The cofactor is pyridoxal 5'-phosphate.

The protein resides in the cytoplasm. The enzyme catalyses (6R)-5,10-methylene-5,6,7,8-tetrahydrofolate + glycine + H2O = (6S)-5,6,7,8-tetrahydrofolate + L-serine. It participates in one-carbon metabolism; tetrahydrofolate interconversion. Its pathway is amino-acid biosynthesis; glycine biosynthesis; glycine from L-serine: step 1/1. Functionally, catalyzes the reversible interconversion of serine and glycine with tetrahydrofolate (THF) serving as the one-carbon carrier. This reaction serves as the major source of one-carbon groups required for the biosynthesis of purines, thymidylate, methionine, and other important biomolecules. Also exhibits THF-independent aldolase activity toward beta-hydroxyamino acids, producing glycine and aldehydes, via a retro-aldol mechanism. The sequence is that of Serine hydroxymethyltransferase from Shewanella baltica (strain OS155 / ATCC BAA-1091).